Here is a 585-residue protein sequence, read N- to C-terminus: Aspartate--tRNA ligase (585 aa).

E171 serves as a coordination point for L-aspartate. Positions 195–198 (QLFK) are aspartate. R217 serves as a coordination point for L-aspartate. ATP contacts are provided by residues 217–219 (RDE) and Q226. H448 contacts L-aspartate. Residue E482 participates in ATP binding. R489 is an L-aspartate binding site. Position 534-537 (534-537 (GLDR)) interacts with ATP.

It belongs to the class-II aminoacyl-tRNA synthetase family. Type 1 subfamily. Homodimer.

It localises to the cytoplasm. The catalysed reaction is tRNA(Asp) + L-aspartate + ATP = L-aspartyl-tRNA(Asp) + AMP + diphosphate. In terms of biological role, catalyzes the attachment of L-aspartate to tRNA(Asp) in a two-step reaction: L-aspartate is first activated by ATP to form Asp-AMP and then transferred to the acceptor end of tRNA(Asp). The chain is Aspartate--tRNA ligase from Histophilus somni (strain 129Pt) (Haemophilus somnus).